An 897-amino-acid chain; its full sequence is F-BAR domain only protein 1 (897 aa).

Residues 1-276 (MIHFFHTLQG…VGFEEYLSSL (276 aa)) are mediates membrane-binding. Positions 2-248 (IHFFHTLQGE…NVENIGIENL (247 aa)) constitute an F-BAR domain. The stretch at 134-154 (LQKTREGYHSKCVELERLRKE) forms a coiled coil. Residues 475–537 (VEDSGLDSPS…PNPAPSSQSN (63 aa)) form a disordered region. Residues 501–520 (PSSQSQSKDSINAASQSRGG) show a composition bias toward polar residues. Positions 630-894 (SWPVAAAITE…RFATGKYMAG (265 aa)) constitute an MHD domain.

The protein belongs to the FCHO family. As to quaternary structure, may oligomerize and form homotetramer. Interacts with acvr1l/alk8; linking this receptor to clathrin-mediated endocytosis.

It localises to the membrane. Its subcellular location is the clathrin-coated pit. In terms of biological role, may function in an early step of clathrin-mediated endocytosis. May regulate Bmp signaling by regulating clathrin-mediated endocytosis of Bmp receptors. The polypeptide is F-BAR domain only protein 1 (fcho1) (Danio rerio (Zebrafish)).